The primary structure comprises 404 residues: Immediate early response gene 5-like protein (404 aa).

Disordered regions lie at residues 86 to 107 (AADFGPLQLGGGGDAEAREPAA), 160 to 231 (AALQ…APAS), and 308 to 327 (QEEEEDDEEDAGGLGAEPPG). Pro residues predominate over residues 177–194 (PLQPGPAPLPLPLPPPAP). The segment covering 195–231 (AALCPRDPRAPAACSAPPGAAPPAAAASPPASPAPAS) has biased composition (low complexity). Over residues 308 to 318 (QEEEEDDEEDA) the composition is skewed to acidic residues.

Belongs to the IER family.

The protein is Immediate early response gene 5-like protein (IER5L) of Homo sapiens (Human).